The following is a 621-amino-acid chain: 1-deoxy-D-xylulose-5-phosphate synthase (621 aa).

Residues His-80 and 121–123 each bind thiamine diphosphate; that span reads GHS. Asp-152 is a binding site for Mg(2+). Residues 153-154, Asn-181, Tyr-288, and Glu-370 each bind thiamine diphosphate; that span reads GA. A Mg(2+)-binding site is contributed by Asn-181.

The protein belongs to the transketolase family. DXPS subfamily. Homodimer. Mg(2+) is required as a cofactor. Thiamine diphosphate serves as cofactor.

It carries out the reaction D-glyceraldehyde 3-phosphate + pyruvate + H(+) = 1-deoxy-D-xylulose 5-phosphate + CO2. It functions in the pathway metabolic intermediate biosynthesis; 1-deoxy-D-xylulose 5-phosphate biosynthesis; 1-deoxy-D-xylulose 5-phosphate from D-glyceraldehyde 3-phosphate and pyruvate: step 1/1. Its function is as follows. Catalyzes the acyloin condensation reaction between C atoms 2 and 3 of pyruvate and glyceraldehyde 3-phosphate to yield 1-deoxy-D-xylulose-5-phosphate (DXP). The chain is 1-deoxy-D-xylulose-5-phosphate synthase from Vibrio campbellii (strain ATCC BAA-1116).